We begin with the raw amino-acid sequence, 972 residues long: Hyaluronan synthase (972 aa).

An A1 region spans residues 152–325 (KPEHQHVGLS…VSLDWRLEQF (174 aa)). The A2 stretch occupies residues 432–604 (EDSHINRVPL…IRAWHLTDGF (173 aa)).

It belongs to the glycosyltransferase 2 family. CS/HAS subfamily. Mg(2+) is required as a cofactor. Co(2+) serves as cofactor.

It is found in the cell membrane. It catalyses the reaction [hyaluronan](n) + UDP-N-acetyl-alpha-D-glucosamine = N-acetyl-beta-D-glucosaminyl-(1-&gt;4)-[hyaluronan](n) + UDP + H(+). It carries out the reaction N-acetyl-beta-D-glucosaminyl-(1-&gt;4)-[hyaluronan](n) + UDP-alpha-D-glucuronate = [hyaluronan](n+1) + UDP + H(+). The catalysed reaction is 3-O-(beta-D-GalNAc-(1-&gt;4)-beta-D-GlcA-(1-&gt;3)-beta-D-Gal-(1-&gt;3)-beta-D-Gal-(1-&gt;4)-beta-D-Xyl)-L-seryl-[protein] + UDP-alpha-D-glucuronate = 3-O-(beta-D-GlcA-(1-&gt;3)-beta-D-GalNAc-(1-&gt;4)-beta-D-GlcA-(1-&gt;3)-beta-D-Gal-(1-&gt;3)-beta-D-Gal-(1-&gt;4)-beta-D-Xyl)-L-seryl-[protein] + UDP + H(+). The enzyme catalyses 3-O-{[beta-D-GalNAc-(1-&gt;4)-beta-D-GlcA-(1-&gt;3)](n)-beta-D-GalNAc-(1-&gt;4)-beta-D-GlcA-(1-&gt;3)-beta-D-Gal-(1-&gt;3)-beta-D-Gal-(1-&gt;4)-beta-D-Xyl}-L-seryl-[protein] + UDP-alpha-D-glucuronate = 3-O-{beta-D-GlcA-(1-&gt;3)-[beta-D-GalNAc-(1-&gt;4)-beta-D-GlcA-(1-&gt;3)](n)-beta-D-GalNAc-(1-&gt;4)-beta-D-GlcA-(1-&gt;3)-beta-D-Gal-(1-&gt;3)-beta-D-Gal-(1-&gt;4)-beta-D-Xyl}-L-seryl-[protein] + UDP + H(+). Functionally, catalyzes the polymerization of hyaluronan, a polysaccharide composed of a repeating disaccharide of N-acetylglucosamine (GlcNAc) and glucuronic acid (GlcUA) units. Each unit has the composition in beta-(1-&gt;4)-GlcUA-beta-(1-&gt;3)-GlcNAc. The protein is Hyaluronan synthase (hyaD) of Pasteurella multocida.